The chain runs to 296 residues: MSEHQYLRLVSDILEKGDQRHDRTGVGTLSLFGAMMRFDLSKGRIPILTTKKVSYRLAIREMLWFLSGDTNIRPLVEQGVSIWSDWPLARYQAETGALLSKKEFEAKILADTEFAKKWGDLGPVYGRQWRRWQGSDGQVYDQIATLIETLKSNPSSRRMLFHGWNVAELKDMALPPCHMVYQYHVTSDGRLNSLLYQRSADVFLGLPFNLVGAAALQAMLADQAGLALGDLVWTGGDVHIYRNHIDQMKEQLAREPRAFPRLELTRHPNSITDYKIEDFAITGYDPHPPIKGAVAV.

DUMP-binding positions include Arg-23 and 157 to 158 (RR). The active-site Nucleophile is Cys-177. DUMP is bound by residues 198 to 201 (RSAD), Asn-209, and 239 to 241 (HIY). A (6R)-5,10-methylene-5,6,7,8-tetrahydrofolate-binding site is contributed by Asp-201. Ala-295 is a binding site for (6R)-5,10-methylene-5,6,7,8-tetrahydrofolate.

Belongs to the thymidylate synthase family. Bacterial-type ThyA subfamily. As to quaternary structure, homodimer.

The protein localises to the cytoplasm. It catalyses the reaction dUMP + (6R)-5,10-methylene-5,6,7,8-tetrahydrofolate = 7,8-dihydrofolate + dTMP. It participates in pyrimidine metabolism; dTTP biosynthesis. Its function is as follows. Catalyzes the reductive methylation of 2'-deoxyuridine-5'-monophosphate (dUMP) to 2'-deoxythymidine-5'-monophosphate (dTMP) while utilizing 5,10-methylenetetrahydrofolate (mTHF) as the methyl donor and reductant in the reaction, yielding dihydrofolate (DHF) as a by-product. This enzymatic reaction provides an intracellular de novo source of dTMP, an essential precursor for DNA biosynthesis. The protein is Thymidylate synthase of Zymomonas mobilis subsp. mobilis (strain ATCC 31821 / ZM4 / CP4).